The primary structure comprises 172 residues: NADH dehydrogenase [ubiquinone] 1 alpha subcomplex subunit 8 (172 aa).

2 CHCH domains span residues 33–74 (GAQC…FRQI) and 75–118 (KRHC…LGWV). 4 short sequence motifs (cx9C motif) span residues 36 to 46 (CDKPNKEFMLC), 56 to 66 (CLEEGKLVNQC), 78 to 88 (CAEPFTEYWTC), and 100 to 110 (CRKQQAQFDEC). Intrachain disulfides connect cysteine 36–cysteine 66, cysteine 46–cysteine 56, cysteine 78–cysteine 110, and cysteine 88–cysteine 100. The tract at residues 133–159 (TDRPLPENPYHSRARPEPNPEVEGDLK) is disordered. A compositionally biased stretch (basic and acidic residues) spans 146 to 159 (ARPEPNPEVEGDLK).

Belongs to the complex I NDUFA8 subunit family. As to quaternary structure, complex I is composed of 45 different subunits.

The protein localises to the mitochondrion inner membrane. It is found in the mitochondrion intermembrane space. It localises to the mitochondrion. In terms of biological role, accessory subunit of the mitochondrial membrane respiratory chain NADH dehydrogenase (Complex I), that is believed not to be involved in catalysis. Complex I functions in the transfer of electrons from NADH to the respiratory chain. The immediate electron acceptor for the enzyme is believed to be ubiquinone. The chain is NADH dehydrogenase [ubiquinone] 1 alpha subcomplex subunit 8 (NDUFA8) from Bos taurus (Bovine).